Consider the following 414-residue polypeptide: Secernin-1 (414 aa).

The residue at position 2 (Ala-2) is an N-acetylalanine. The active site involves Cys-9.

Belongs to the peptidase C69 family. Secernin subfamily.

Its subcellular location is the cytoplasm. Regulates exocytosis in mast cells. Increases both the extent of secretion and the sensitivity of mast cells to stimulation with calcium. This chain is Secernin-1 (SCRN1), found in Homo sapiens (Human).